The sequence spans 211 residues: MNGVATTAALNLARHLQGAGITNAEVLAVVAKTPRELFLDAALGHKAYENTALPIGQGQTISQPYIVARMTELLLESRPKRVLEIGTGSGYQAAILAQLVDELCTVERIKSLQIQARQRLKRLDLHNVSFKYGDGWQGWANKGPFDAIMVTAAASSVPQALLQQLADGGVLVIPVGEETQQLMRVVRMGDQFHSQTIEMVKFVPLVNGELA.

The active site involves S62.

This sequence belongs to the methyltransferase superfamily. L-isoaspartyl/D-aspartyl protein methyltransferase family.

The protein localises to the cytoplasm. It carries out the reaction [protein]-L-isoaspartate + S-adenosyl-L-methionine = [protein]-L-isoaspartate alpha-methyl ester + S-adenosyl-L-homocysteine. Its function is as follows. Catalyzes the methyl esterification of L-isoaspartyl residues in peptides and proteins that result from spontaneous decomposition of normal L-aspartyl and L-asparaginyl residues. It plays a role in the repair and/or degradation of damaged proteins. This chain is Protein-L-isoaspartate O-methyltransferase, found in Shewanella loihica (strain ATCC BAA-1088 / PV-4).